Here is a 723-residue protein sequence, read N- to C-terminus: FACT complex subunit Ssrp1 (723 aa).

At serine 443 the chain carries Phosphoserine. Disordered regions lie at residues 459–564 (EARE…AFML) and 586–723 (AKKG…EASD). 2 stretches are compositionally biased toward acidic residues: residues 464 to 478 (EEDD…ESTD) and 486 to 507 (NESD…DDSD). Over residues 531-557 (KKEKKHKEKERTKKPSKKKKDSGKPKR) the composition is skewed to basic residues. A DNA-binding region (HMG box) is located at residues 555–621 (PKRATTAFML…RYHDEMRNYK (67 aa)). Positions 586 to 621 (AKKGGEMWKELKDKSKWEDAAAKDKQRYHDEMRNYK) are enriched in basic and acidic residues. Serine 628 is subject to Phosphoserine. A compositionally biased stretch (polar residues) spans 644–656 (PSPSKKANTSGSG). Phosphoserine is present on residues serine 664 and serine 668. Over residues 664–676 (SDDDSTSSDDEKD) the composition is skewed to acidic residues. At threonine 669 the chain carries Phosphothreonine. Serine 670 and serine 671 each carry phosphoserine. Over residues 677 to 692 (NEPAKKKSKPPSDGDA) the composition is skewed to basic and acidic residues. The segment covering 702 to 723 (EPEESEEDSNASDEDEEDEASD) has biased composition (acidic residues).

Belongs to the SSRP1 family. Component of the FACT complex, a stable heterodimer of dre4/spt16 and Ssrp. Interacts with CHD1 and TRL/GAGA. In terms of tissue distribution, expressed at highest levels in nurse cells of the ovary.

The protein resides in the nucleus. The protein localises to the chromosome. Its subcellular location is the nucleolus. Component of the FACT complex, a general chromatin factor that acts to reorganize nucleosomes. The FACT complex is involved in multiple processes that require DNA as a template such as mRNA elongation, DNA replication and DNA repair. During transcription elongation the FACT complex acts as a histone chaperone that both destabilizes and restores nucleosomal structure. It facilitates the passage of RNA polymerase II and transcription by promoting the dissociation of one histone H2A-H2B dimer from the nucleosome, then subsequently promotes the reestablishment of the nucleosome following the passage of RNA polymerase II. Binds specifically to single-stranded DNA and RNA with highest affinity for nucleotides G and U. The FACT complex is required for expression of Hox genes. This chain is FACT complex subunit Ssrp1 (Ssrp), found in Drosophila melanogaster (Fruit fly).